The following is a 218-amino-acid chain: Small ribosomal subunit protein uS3c (218 aa).

The 72-residue stretch at 47-118 (VQKNIRISSG…KLNIAITRIS (72 aa)) folds into the KH type-2 domain.

It belongs to the universal ribosomal protein uS3 family. In terms of assembly, part of the 30S ribosomal subunit.

It is found in the plastid. The protein resides in the chloroplast. The protein is Small ribosomal subunit protein uS3c (rps3) of Lepidium virginicum (Virginia pepperweed).